The following is a 98-amino-acid chain: NADH-ubiquinone oxidoreductase chain 4L (98 aa).

The next 3 helical transmembrane spans lie at 2–22 (PSIS…MLMF), 28–48 (SSLL…TLII), and 61–81 (IMLL…LVMV).

This sequence belongs to the complex I subunit 4L family. As to quaternary structure, core subunit of respiratory chain NADH dehydrogenase (Complex I) which is composed of 45 different subunits.

It is found in the mitochondrion inner membrane. The enzyme catalyses a ubiquinone + NADH + 5 H(+)(in) = a ubiquinol + NAD(+) + 4 H(+)(out). Core subunit of the mitochondrial membrane respiratory chain NADH dehydrogenase (Complex I) which catalyzes electron transfer from NADH through the respiratory chain, using ubiquinone as an electron acceptor. Part of the enzyme membrane arm which is embedded in the lipid bilayer and involved in proton translocation. The chain is NADH-ubiquinone oxidoreductase chain 4L (MT-ND4L) from Allocebus trichotis (Hairy-eared dwarf lemur).